The primary structure comprises 161 residues: Allophycocyanin alpha-B chain (161 aa).

An N4-methylasparagine modification is found at N71. (2R,3E)-phycocyanobilin is bound at residue C81.

The protein belongs to the phycobiliprotein family. In terms of processing, contains one covalently linked bilin chromophore.

It is found in the plastid. The protein localises to the chloroplast thylakoid membrane. Functionally, allophycocyanin is a photosynthetic bile pigment-protein complex with maximum absorption at approximately 650 nanometers. The polypeptide is Allophycocyanin alpha-B chain (apcD) (Pyropia yezoensis (Susabi-nori)).